The chain runs to 252 residues: MKVLNLGSKKQASFYVACELYKEMAFNQHCKLGLATGGTMTDLYEQLVKLLNKNQLNVDNVSTFNLDEYVGLTASHPQSYHYYMDDMLFKQYPYFNRKNIHIPNGDAYDMNAEASTYNDVLEQQGQRDIQILGIGENGHIGFNEPGTPFDSVTHIVDLTESTIKANSRYFENEDDVPKQAISMGLANILQAKRIILLAFGEKKRAAITHLLNQEISVDVPATLLHKHPNVEIYLDDEACPKNVAKIHVDEMD.

D67 acts as the Proton acceptor; for enolization step in catalysis. The For ring-opening step role is filled by N137. The active-site Proton acceptor; for ring-opening step is the H139. The For ring-opening step role is filled by E144.

It belongs to the glucosamine/galactosamine-6-phosphate isomerase family. NagB subfamily.

It catalyses the reaction alpha-D-glucosamine 6-phosphate + H2O = beta-D-fructose 6-phosphate + NH4(+). It functions in the pathway amino-sugar metabolism; N-acetylneuraminate degradation; D-fructose 6-phosphate from N-acetylneuraminate: step 5/5. Its function is as follows. Catalyzes the reversible isomerization-deamination of glucosamine 6-phosphate (GlcN6P) to form fructose 6-phosphate (Fru6P) and ammonium ion. The chain is Glucosamine-6-phosphate deaminase from Staphylococcus aureus (strain MRSA252).